The chain runs to 202 residues: Nucleoside triphosphate pyrophosphatase (202 aa).

The active-site Proton acceptor is Asp-77.

Belongs to the Maf family. A divalent metal cation serves as cofactor.

It localises to the cytoplasm. The catalysed reaction is a ribonucleoside 5'-triphosphate + H2O = a ribonucleoside 5'-phosphate + diphosphate + H(+). It carries out the reaction a 2'-deoxyribonucleoside 5'-triphosphate + H2O = a 2'-deoxyribonucleoside 5'-phosphate + diphosphate + H(+). In terms of biological role, nucleoside triphosphate pyrophosphatase. May have a dual role in cell division arrest and in preventing the incorporation of modified nucleotides into cellular nucleic acids. The sequence is that of Nucleoside triphosphate pyrophosphatase from Rickettsia canadensis (strain McKiel).